Reading from the N-terminus, the 352-residue chain is Phosphoribosylformylglycinamidine cyclo-ligase (352 aa).

It belongs to the AIR synthase family.

Its subcellular location is the cytoplasm. It catalyses the reaction 2-formamido-N(1)-(5-O-phospho-beta-D-ribosyl)acetamidine + ATP = 5-amino-1-(5-phospho-beta-D-ribosyl)imidazole + ADP + phosphate + H(+). The protein operates within purine metabolism; IMP biosynthesis via de novo pathway; 5-amino-1-(5-phospho-D-ribosyl)imidazole from N(2)-formyl-N(1)-(5-phospho-D-ribosyl)glycinamide: step 2/2. This is Phosphoribosylformylglycinamidine cyclo-ligase from Pseudomonas savastanoi pv. phaseolicola (strain 1448A / Race 6) (Pseudomonas syringae pv. phaseolicola (strain 1448A / Race 6)).